We begin with the raw amino-acid sequence, 79 residues long: MIFTPFLPPADLSVFQNVKGPQKDPEELVAVSDTAEDPSSGTGLPREPALLRGSWRSRFQRALACFIKCFRGGYRALGI.

The interval 19 to 48 is disordered; it reads KGPQKDPEELVAVSDTAEDPSSGTGLPREP.

The protein belongs to the FAM236 family.

This is Protein FAM236C from Homo sapiens (Human).